An 82-amino-acid polypeptide reads, in one-letter code: Cortexin-1 (82 aa).

Residues 1–20 (MSAPWTLSPEPLPPSTGPPV) form a disordered region. The chain crosses the membrane as a helical span at residues 30 to 50 (TVFAFVLCLLVVLVLLMVRCV).

Belongs to the cortexin family. As to expression, neuron specific.

It is found in the membrane. In terms of biological role, may mediate extracellular or intracellular signaling of cortical neurons during forebrain development. The sequence is that of Cortexin-1 (Ctxn1) from Rattus norvegicus (Rat).